The following is a 120-amino-acid chain: Large ribosomal subunit protein bL20 (120 aa).

This sequence belongs to the bacterial ribosomal protein bL20 family.

Functionally, binds directly to 23S ribosomal RNA and is necessary for the in vitro assembly process of the 50S ribosomal subunit. It is not involved in the protein synthesizing functions of that subunit. This chain is Large ribosomal subunit protein bL20, found in Xanthobacter autotrophicus (strain ATCC BAA-1158 / Py2).